We begin with the raw amino-acid sequence, 248 residues long: Ubiquinone biosynthesis O-methyltransferase (248 aa).

4 residues coordinate S-adenosyl-L-methionine: R41, G72, D93, and M136.

Belongs to the methyltransferase superfamily. UbiG/COQ3 family.

It catalyses the reaction a 3-demethylubiquinol + S-adenosyl-L-methionine = a ubiquinol + S-adenosyl-L-homocysteine + H(+). The catalysed reaction is a 3-(all-trans-polyprenyl)benzene-1,2-diol + S-adenosyl-L-methionine = a 2-methoxy-6-(all-trans-polyprenyl)phenol + S-adenosyl-L-homocysteine + H(+). It functions in the pathway cofactor biosynthesis; ubiquinone biosynthesis. Functionally, O-methyltransferase that catalyzes the 2 O-methylation steps in the ubiquinone biosynthetic pathway. The sequence is that of Ubiquinone biosynthesis O-methyltransferase from Bartonella bacilliformis (strain ATCC 35685 / KC583 / Herrer 020/F12,63).